We begin with the raw amino-acid sequence, 225 residues long: Pathogenesis-related thaumatin-like protein 3.8 (225 aa).

The N-terminal stretch at 1-26 (MAKVSDLALLLVAGMAISLYIQETGA) is a signal peptide. Intrachain disulfides connect Cys-35/Cys-224, Cys-76/Cys-86, Cys-91/Cys-97, Cys-139/Cys-213, Cys-144/Cys-197, Cys-152/Cys-162, Cys-166/Cys-175, and Cys-176/Cys-184. The N-linked (GlcNAc...) asparagine glycan is linked to Asn-188.

This sequence belongs to the thaumatin family.

In terms of biological role, may be involved in disease resistance. In Cryptomeria japonica (Japanese cedar), this protein is Pathogenesis-related thaumatin-like protein 3.8.